The following is a 297-amino-acid chain: Developmental pluripotency-associated protein 4 (297 aa).

The disordered stretch occupies residues 1-77 (MEPSGSKKGR…KVPVPPFPQH (77 aa)). Over residues 23–34 (SSQPSTSSAKTK) the composition is skewed to low complexity. Over residues 43-63 (SEKDDGCKPEEKSAQDPETPG) the composition is skewed to basic and acidic residues. At S211 the chain carries Phosphoserine.

In terms of assembly, interacts with DPPA2. Interacts with PCGF1.

Its subcellular location is the nucleus. Functionally, may be involved in the maintenance of active epigenetic status of target genes. May inhibit differentiation of embryonic stem (ES) cells into a primitive ectoderm lineage. The chain is Developmental pluripotency-associated protein 4 (Dppa4) from Rattus norvegicus (Rat).